The primary structure comprises 350 residues: UDP-N-acetylenolpyruvoylglucosamine reductase (350 aa).

Positions 24–195 (HVEATARWLL…VAVEFNLPLL (172 aa)) constitute an FAD-binding PCMH-type domain. Residue Arg172 is part of the active site. Ser245 (proton donor) is an active-site residue. Residue Glu342 is part of the active site.

The protein belongs to the MurB family. It depends on FAD as a cofactor.

The protein resides in the cytoplasm. The enzyme catalyses UDP-N-acetyl-alpha-D-muramate + NADP(+) = UDP-N-acetyl-3-O-(1-carboxyvinyl)-alpha-D-glucosamine + NADPH + H(+). It functions in the pathway cell wall biogenesis; peptidoglycan biosynthesis. Cell wall formation. The chain is UDP-N-acetylenolpyruvoylglucosamine reductase from Xanthomonas euvesicatoria pv. vesicatoria (strain 85-10) (Xanthomonas campestris pv. vesicatoria).